A 298-amino-acid chain; its full sequence is Enoyl-CoA hydratase ACTT6 (298 aa).

This sequence belongs to the enoyl-CoA hydratase/isomerase family.

The protein operates within mycotoxin biosynthesis. Enoyl-CoA hydratase; part of the gene clusters that mediate the biosynthesis of the host-selective toxins (HSTs) ACT-toxins responsible for brown spot of tangerine disease by the tangerine pathotype which affects tangerines and mandarins. ACT-toxins consist of three moieties, 9,10-epoxy-8-hydroxy-9-methyl-decatrienoic acid (EDA), valine and a polyketide. ACT-toxin I is toxic to both citrus and pear; toxin II the 5''-deoxy derivative of ACT-toxin I, is highly toxic to pear and slightly toxic to citrus. On cellular level, ACT-toxins affect plasma membrane of susceptible cells and cause a sudden increase in loss of K(+) after a few minutes of toxin treatment. The acyl-CoA ligase ACTT1, the hydrolase ACTT2, the enoyl-CoA hydratases ACTT3 and ACTT6, and the acyl-CoA synthetase ACTT5 are all involved in the biosynthesis of the AK-, AF- and ACT-toxin common 9,10-epoxy-8-hydroxy-9-methyl-decatrienoic acid (EDA) structural moiety. The exact role of each enzyme, and of additional enzymes identified within the AF-toxin clusters have still to be determined. On the other hand, ACTTS1 to ACTTS4 are specific to the tangerine pathotype. The function of ACTTS3 is to elongate the polyketide chain portion of ACT-toxin that is unique to this toxin. The enoyl-reductase ACTTS2 might complement the missing enoyl-reductase (ER) domain in ACTTS3 in the synthesis of the polyketide portion of ACT-toxin. The roles of the nonribosomal peptide synthetases-related proteins ACTTS1 and ACTTS4 have also still not been elucidated. The protein is Enoyl-CoA hydratase ACTT6 of Alternaria alternata (Alternaria rot fungus).